Here is a 760-residue protein sequence, read N- to C-terminus: Xaa-Pro dipeptidyl-peptidase (760 aa).

Residues S349, D469, and H499 each act as charge relay system in the active site.

This sequence belongs to the peptidase S15 family. In terms of assembly, homodimer.

It localises to the cytoplasm. It catalyses the reaction Hydrolyzes Xaa-Pro-|- bonds to release unblocked, N-terminal dipeptides from substrates including Ala-Pro-|-p-nitroanilide and (sequentially) Tyr-Pro-|-Phe-Pro-|-Gly-Pro-|-Ile.. Functionally, removes N-terminal dipeptides sequentially from polypeptides having unsubstituted N-termini provided that the penultimate residue is proline. The polypeptide is Xaa-Pro dipeptidyl-peptidase (Streptococcus pyogenes serotype M4 (strain MGAS10750)).